Here is a 64-residue protein sequence, read N- to C-terminus: Relaxin (64 aa).

Intrachain disulfides connect Cys-11–Cys-51, Cys-23–Cys-64, and Cys-50–Cys-55.

It belongs to the insulin family. Heterodimer of a B chain and an A chain linked by two disulfide bonds.

It localises to the secreted. The chain is Relaxin from Leucoraja erinaceus (Little skate).